Here is a 275-residue protein sequence, read N- to C-terminus: Shikimate dehydrogenase (NADP(+)) (275 aa).

Residues 15-17 (SKS) and T62 contribute to the shikimate site. The active-site Proton acceptor is the K66. E78 is an NADP(+) binding site. Positions 87 and 102 each coordinate shikimate. Residues 127–131 (GAGGA), 151–156 (NRTPQK), and M215 each bind NADP(+). Y217 contributes to the shikimate binding site. Residue G239 coordinates NADP(+).

Belongs to the shikimate dehydrogenase family. As to quaternary structure, homodimer.

It catalyses the reaction shikimate + NADP(+) = 3-dehydroshikimate + NADPH + H(+). It participates in metabolic intermediate biosynthesis; chorismate biosynthesis; chorismate from D-erythrose 4-phosphate and phosphoenolpyruvate: step 4/7. Its function is as follows. Involved in the biosynthesis of the chorismate, which leads to the biosynthesis of aromatic amino acids. Catalyzes the reversible NADPH linked reduction of 3-dehydroshikimate (DHSA) to yield shikimate (SA). The sequence is that of Shikimate dehydrogenase (NADP(+)) from Nitrosospira multiformis (strain ATCC 25196 / NCIMB 11849 / C 71).